The primary structure comprises 383 residues: Probable L-aspartate decarboxylase (383 aa).

The residue at position 231 (Lys231) is an N6-(pyridoxal phosphate)lysine.

The protein belongs to the group II decarboxylase family. MfnA subfamily. The cofactor is pyridoxal 5'-phosphate.

The catalysed reaction is L-aspartate + H(+) = beta-alanine + CO2. Its pathway is cofactor biosynthesis; coenzyme A biosynthesis. Functionally, catalyzes the decarboxylation of L-aspartate to produce beta-alanine. The sequence is that of Probable L-aspartate decarboxylase from Thermococcus gammatolerans (strain DSM 15229 / JCM 11827 / EJ3).